The chain runs to 375 residues: Chaperone protein DnaJ (375 aa).

The 66-residue stretch at 5–70 (DYYEVLGVER…SKRAAFDQYG (66 aa)) folds into the J domain. The CR-type zinc finger occupies 134–212 (GTTVSIRVPT…CHGEGRVEEY (79 aa)). The Zn(2+) site is built by Cys147, Cys150, Cys164, Cys167, Cys186, Cys189, Cys200, and Cys203. 4 CXXCXGXG motif repeats span residues 147-154 (CQPCDGSG), 164-171 (CPTCGGIG), 186-193 (CPRCHGQG), and 200-207 (CTSCHGEG).

The protein belongs to the DnaJ family. Homodimer. Requires Zn(2+) as cofactor.

It localises to the cytoplasm. Its function is as follows. Participates actively in the response to hyperosmotic and heat shock by preventing the aggregation of stress-denatured proteins and by disaggregating proteins, also in an autonomous, DnaK-independent fashion. Unfolded proteins bind initially to DnaJ; upon interaction with the DnaJ-bound protein, DnaK hydrolyzes its bound ATP, resulting in the formation of a stable complex. GrpE releases ADP from DnaK; ATP binding to DnaK triggers the release of the substrate protein, thus completing the reaction cycle. Several rounds of ATP-dependent interactions between DnaJ, DnaK and GrpE are required for fully efficient folding. Also involved, together with DnaK and GrpE, in the DNA replication of plasmids through activation of initiation proteins. The protein is Chaperone protein DnaJ of Pseudomonas putida (strain ATCC 47054 / DSM 6125 / CFBP 8728 / NCIMB 11950 / KT2440).